A 181-amino-acid chain; its full sequence is Ferritin heavy chain (181 aa).

The residue at position 1 (M1) is an N-acetylmethionine. N-acetylthreonine; in Ferritin heavy chain, N-terminally processed is present on T2. The Ferritin-like diiron domain maps to 11–160 (QNYHQDSEAA…DHITNLHRMG (150 aa)). At S179 the chain carries Phosphoserine.

This sequence belongs to the ferritin family. Oligomer of 24 subunits. There are two types of subunits: L (light) chain and H (heavy) chain. The major chain can be light or heavy, depending on the species and tissue type. The functional molecule forms a roughly spherical shell with a diameter of 12 nm and contains a central cavity into which the insoluble mineral iron core is deposited. Interacts with NCOA4; NCOA4 promotes targeting of the iron-binding ferritin complex to autolysosomes following starvation or iron depletion. As to quaternary structure, (Microbial infection) Interacts with classical swine fever virus protein NS4B. In terms of assembly, (Microbial infection) Interacts with Porcine circovirus 2 ORF4 protein.

The protein resides in the cytoplasm. The protein localises to the lysosome. It localises to the cytoplasmic vesicle. It is found in the autophagosome. It carries out the reaction 4 Fe(2+) + O2 + 4 H(+) = 4 Fe(3+) + 2 H2O. Functionally, stores iron in a soluble, non-toxic, readily available form. Important for iron homeostasis. Has ferroxidase activity. Iron is taken up in the ferrous form and deposited as ferric hydroxides after oxidation. Also plays a role in delivery of iron to cells. Mediates iron uptake in capsule cells of the developing kidney. Delivery to lysosomes is mediated by the cargo receptor NCOA4 for autophagic degradation and release of iron. (Microbial infection) Is unable to assume its function upon interaction with viral proteins, thereby increasing Fe concentration in the cytoplasm. This would inhibit the accumulation of reactive oxygen in host cells, leading to reduced apoptosis and increasing the survival of virus infected cell. This Sus scrofa (Pig) protein is Ferritin heavy chain (FTH1).